Reading from the N-terminus, the 1010-residue chain is 2-oxoglutarate dehydrogenase-like, mitochondrial (1010 aa).

The transit peptide at 1 to 73 (MSQLRLLPSR…RSVHKSWDSF (73 aa)) directs the protein to the mitochondrion. 3 residues coordinate Ca(2+): His130, Asp143, and Asp145. The thiamine diphosphate site is built by Arg299, Asp398, Asn431, Ile433, and Gln663. 3 residues coordinate Mg(2+): Asp398, Asn431, and Ile433.

The protein belongs to the alpha-ketoglutarate dehydrogenase family. The OGDHC complex comprises multiple copies of three catalytic enzyme components, the 2-oxoglutarate dehydrogenase (OGDH/E1), the dihydrolipoamide dehydrogenase (DLST/E2) and the dihydrolipoamide dehydrogenase (DLD/E3). OGDHL/E1-like isoenzyme may replace OGDH in the OGDHC complex in the brain. The presence of either ODGH/E1 or ODGHL/E1-like isoenzyme in the complex may depend on its tissular distribution. Requires thiamine diphosphate as cofactor. The cofactor is Mg(2+).

The protein resides in the mitochondrion matrix. The catalysed reaction is N(6)-[(R)-lipoyl]-L-lysyl-[protein] + 2-oxoglutarate + H(+) = N(6)-[(R)-S(8)-succinyldihydrolipoyl]-L-lysyl-[protein] + CO2. Its function is as follows. 2-oxoglutarate dehydrogenase (E1-like) component of the 2-oxoglutarate dehydrogenase multienzyme complex (OGDHC) which mediates the decarboxylation of alpha-ketoglutarate in the tricarboxylic acid cycle. The OGDHC complex catalyzes the overall conversion of 2-oxoglutarate to succinyl-CoA and CO(2) while reducing NAD(+) to NADH. The OGDHC complex is mainly active in the mitochondrion. Involved in the inhibition of cell proliferation and in apoptosis. The sequence is that of 2-oxoglutarate dehydrogenase-like, mitochondrial (OGDHL) from Pongo abelii (Sumatran orangutan).